The chain runs to 314 residues: Probable cell division protein WhiA (314 aa).

The H-T-H motif DNA-binding region spans 274–308; that stretch reads SLKELGEMVSTGPISKSGVNHRLRKLNDLADKIRN.

Belongs to the WhiA family.

Involved in cell division and chromosome segregation. This is Probable cell division protein WhiA from Staphylococcus aureus (strain Mu3 / ATCC 700698).